A 260-amino-acid polypeptide reads, in one-letter code: Shikimate dehydrogenase (NADP(+)) (260 aa).

Shikimate-binding positions include 14 to 16 (SAS) and threonine 60. The active-site Proton acceptor is lysine 64. 2 residues coordinate shikimate: asparagine 85 and aspartate 100. NADP(+)-binding positions include 121–125 (GAGGA), 145–150 (NRTYER), and phenylalanine 201. Tyrosine 203 lines the shikimate pocket. Glycine 225 lines the NADP(+) pocket.

The protein belongs to the shikimate dehydrogenase family. In terms of assembly, homodimer.

It carries out the reaction shikimate + NADP(+) = 3-dehydroshikimate + NADPH + H(+). The protein operates within metabolic intermediate biosynthesis; chorismate biosynthesis; chorismate from D-erythrose 4-phosphate and phosphoenolpyruvate: step 4/7. Functionally, involved in the biosynthesis of the chorismate, which leads to the biosynthesis of aromatic amino acids. Catalyzes the reversible NADPH linked reduction of 3-dehydroshikimate (DHSA) to yield shikimate (SA). The chain is Shikimate dehydrogenase (NADP(+)) from Pyrobaculum neutrophilum (strain DSM 2338 / JCM 9278 / NBRC 100436 / V24Sta) (Thermoproteus neutrophilus).